The chain runs to 141 residues: uncharacterized protein (141 aa).

4 helical membrane passes run tyrosine 7 to proline 24, phenylalanine 39 to isoleucine 56, phenylalanine 69 to phenylalanine 91, and phenylalanine 116 to isoleucine 138.

The protein resides in the cell membrane. This is an uncharacterized protein from Aquifex aeolicus (strain VF5).